Reading from the N-terminus, the 103-residue chain is Trp operon repressor homolog (103 aa).

A DNA-binding region spans residues 62–85 (QRKISELLGVGVATITRGSNELKH).

This sequence belongs to the TrpR family. As to quaternary structure, homodimer.

The protein resides in the cytoplasm. In terms of biological role, this protein is an aporepressor. When complexed with L-tryptophan it binds the operator region of the trp operon and prevents the initiation of transcription. The protein is Trp operon repressor homolog of Photobacterium profundum (strain SS9).